Reading from the N-terminus, the 218-residue chain is UPF0301 protein RPB_4502 (218 aa).

The disordered stretch occupies residues 1-26 (MVTKSKRPKSGDRSGREPGNAGPIEQ).

It belongs to the UPF0301 (AlgH) family.

The protein is UPF0301 protein RPB_4502 of Rhodopseudomonas palustris (strain HaA2).